The primary structure comprises 411 residues: Imidazolonepropionase (411 aa).

Residues histidine 75 and histidine 77 each contribute to the Fe(3+) site. The Zn(2+) site is built by histidine 75 and histidine 77. Residues arginine 84, tyrosine 147, and histidine 180 each contribute to the 4-imidazolone-5-propanoate site. Tyrosine 147 is a binding site for N-formimidoyl-L-glutamate. Residue histidine 245 participates in Fe(3+) binding. A Zn(2+)-binding site is contributed by histidine 245. Glutamine 248 provides a ligand contact to 4-imidazolone-5-propanoate. Aspartate 320 is a Fe(3+) binding site. Aspartate 320 is a Zn(2+) binding site. Residues asparagine 322 and glycine 324 each contribute to the N-formimidoyl-L-glutamate site. Threonine 325 lines the 4-imidazolone-5-propanoate pocket.

Belongs to the metallo-dependent hydrolases superfamily. HutI family. The cofactor is Zn(2+). Requires Fe(3+) as cofactor.

Its subcellular location is the cytoplasm. It catalyses the reaction 4-imidazolone-5-propanoate + H2O = N-formimidoyl-L-glutamate. It functions in the pathway amino-acid degradation; L-histidine degradation into L-glutamate; N-formimidoyl-L-glutamate from L-histidine: step 3/3. In terms of biological role, catalyzes the hydrolytic cleavage of the carbon-nitrogen bond in imidazolone-5-propanoate to yield N-formimidoyl-L-glutamate. It is the third step in the universal histidine degradation pathway. The chain is Imidazolonepropionase from Photobacterium profundum (strain SS9).